The primary structure comprises 734 residues: Photosystem I P700 chlorophyll a apoprotein A2 (734 aa).

A run of 8 helical transmembrane segments spans residues 46 to 69 (IFASHFGQLAIIFLWTSGNLFHVA), 135 to 158 (LYTGALFLLFLSAISLIAGWLHLQ), 175 to 199 (LNHHLSGLFGVSSLAWTGHLVHVAI), 273 to 291 (MAHHHLAIAFIFLVAGHMY), 330 to 353 (IHFQLGLALASLGVITSLVAQHMY), 369 to 395 (AALYTHHQYIAGFIMTGAFAHGAIFFI), 417 to 439 (AIKSHLSWASLFLGFHTLGLYVH), and 517 to 535 (FLVHHAIALGLHTTTLILV). Cys-559 and Cys-568 together coordinate [4Fe-4S] cluster. 2 helical membrane-spanning segments follow: residues 575-596 (AFYLAVFWMLNTIGWVTFYWHW) and 643-665 (LSVWAWMFLFGHLVWATGFMFLI). Residues His-654, Met-662, and Tyr-670 each coordinate chlorophyll a. Residue Trp-671 coordinates phylloquinone. Residues 707–727 (LVGLAHFSVGYIFTYAAFLIA) form a helical membrane-spanning segment.

This sequence belongs to the PsaA/PsaB family. As to quaternary structure, the PsaA/B heterodimer binds the P700 chlorophyll special pair and subsequent electron acceptors. PSI consists of a core antenna complex that captures photons, and an electron transfer chain that converts photonic excitation into a charge separation. The eukaryotic PSI reaction center is composed of at least 11 subunits. It depends on P700 is a chlorophyll a/chlorophyll a' dimer, A0 is one or more chlorophyll a, A1 is one or both phylloquinones and FX is a shared 4Fe-4S iron-sulfur center. as a cofactor.

It is found in the plastid. The protein localises to the chloroplast thylakoid membrane. It catalyses the reaction reduced [plastocyanin] + hnu + oxidized [2Fe-2S]-[ferredoxin] = oxidized [plastocyanin] + reduced [2Fe-2S]-[ferredoxin]. PsaA and PsaB bind P700, the primary electron donor of photosystem I (PSI), as well as the electron acceptors A0, A1 and FX. PSI is a plastocyanin-ferredoxin oxidoreductase, converting photonic excitation into a charge separation, which transfers an electron from the donor P700 chlorophyll pair to the spectroscopically characterized acceptors A0, A1, FX, FA and FB in turn. Oxidized P700 is reduced on the lumenal side of the thylakoid membrane by plastocyanin. In Chloranthus spicatus (Chulantree), this protein is Photosystem I P700 chlorophyll a apoprotein A2.